The primary structure comprises 832 residues: Alpha-glucan phosphorylase, H isozyme (832 aa).

Lys678 carries the post-translational modification N6-(pyridoxal phosphate)lysine.

This sequence belongs to the glycogen phosphorylase family. The cofactor is pyridoxal 5'-phosphate.

Its subcellular location is the cytoplasm. The enzyme catalyses [(1-&gt;4)-alpha-D-glucosyl](n) + phosphate = [(1-&gt;4)-alpha-D-glucosyl](n-1) + alpha-D-glucose 1-phosphate. Phosphorylase is an important allosteric enzyme in carbohydrate metabolism. Enzymes from different sources differ in their regulatory mechanisms and in their natural substrates. However, all known phosphorylases share catalytic and structural properties. In Triticum aestivum (Wheat), this protein is Alpha-glucan phosphorylase, H isozyme.